The following is a 445-amino-acid chain: Chromosome partition protein MukF (445 aa).

The leucine-zipper stretch occupies residues 213–241 (LSETSNTLKELQDTLQAAGDELQTQILDI).

This sequence belongs to the MukF family. Interacts, and probably forms a ternary complex, with MukE and MukB via its C-terminal region. The complex formation is stimulated by calcium or magnesium. It is required for an interaction between MukE and MukB.

The protein resides in the cytoplasm. It localises to the nucleoid. Involved in chromosome condensation, segregation and cell cycle progression. May participate in facilitating chromosome segregation by condensation DNA from both sides of a centrally located replisome during cell division. Not required for mini-F plasmid partitioning. Probably acts via its interaction with MukB and MukE. Overexpression results in anucleate cells. It has a calcium binding activity. This Vibrio vulnificus (strain CMCP6) protein is Chromosome partition protein MukF.